The primary structure comprises 229 residues: 3-dehydroquinate dehydratase (229 aa).

3-dehydroquinate-binding positions include 33–35 (EWR) and arginine 65. Histidine 121 acts as the Proton donor/acceptor in catalysis. The active-site Schiff-base intermediate with substrate is the lysine 146. 3-dehydroquinate is bound by residues arginine 188, serine 207, and glutamine 211.

It belongs to the type-I 3-dehydroquinase family. As to quaternary structure, homodimer.

The catalysed reaction is 3-dehydroquinate = 3-dehydroshikimate + H2O. It participates in metabolic intermediate biosynthesis; chorismate biosynthesis; chorismate from D-erythrose 4-phosphate and phosphoenolpyruvate: step 3/7. In terms of biological role, involved in the third step of the chorismate pathway, which leads to the biosynthesis of aromatic amino acids. Catalyzes the cis-dehydration of 3-dehydroquinate (DHQ) and introduces the first double bond of the aromatic ring to yield 3-dehydroshikimate. This Lactococcus lactis subsp. cremoris (strain SK11) protein is 3-dehydroquinate dehydratase.